A 94-amino-acid chain; its full sequence is MFTINAEVRKEQGKGASRRLRAANKFPAIIYGGSEAPIAIELDHDKVMNMQAKAEFYSEVLTLVVDGKEVKVKAQAVQRHAFKPKLTHIDFIRA.

Belongs to the bacterial ribosomal protein bL25 family. In terms of assembly, part of the 50S ribosomal subunit; part of the 5S rRNA/L5/L18/L25 subcomplex. Contacts the 5S rRNA. Binds to the 5S rRNA independently of L5 and L18.

Its function is as follows. This is one of the proteins that binds to the 5S RNA in the ribosome where it forms part of the central protuberance. The sequence is that of Large ribosomal subunit protein bL25 from Salmonella arizonae (strain ATCC BAA-731 / CDC346-86 / RSK2980).